Reading from the N-terminus, the 743-residue chain is Dynein regulatory complex protein 1 homolog (743 aa).

Composition is skewed to acidic residues over residues 1–10 (MDDNEDELEE) and 19–28 (SVEEEEEVEP). Residues 1–34 (MDDNEDELEEHQELVSDGSVEEEEEVEPDLGPVD) form a disordered region. 2 coiled-coil regions span residues 175-332 (DQIE…VLMN) and 395-416 (KLHSNINDMESKAHQARLNNRE). Residues 599–620 (NRLQGAAGGQPDEKEHRSTGDT) are disordered. The stretch at 715–742 (KMRVQYDAEVVFLRRQNEELRHLLQKFT) forms a coiled coil.

This sequence belongs to the DRC1 family.

This Drosophila melanogaster (Fruit fly) protein is Dynein regulatory complex protein 1 homolog.